Here is a 407-residue protein sequence, read N- to C-terminus: Transmembrane protein 184B (407 aa).

Positions 1 to 28 (MTVRGAALAPDPASPTTTTASPSVSATP) are enriched in low complexity. The tract at residues 1 to 31 (MTVRGAALAPDPASPTTTTASPSVSATPEGS) is disordered. A run of 7 helical transmembrane segments spans residues 40-60 (FLMTTAAQAISGFFVWTALLI), 84-104 (ILFIVPIYAFDSWLSLLFFTN), 121-141 (FVIYNFLSLCYEYLGGESAIM), 178-198 (LQFCVVKPLMAVSTVILQAFG), 214-234 (VTIIYNISVSLALYALFLFYF), 249-269 (FFMVKSVIFLSFWQGMLLAIL), and 290-310 (VAAGYQDFIICVEMFFAALAL). The tract at residues 369–395 (TLEPGPTWRGGTHSLSRSHSLSGARDN) is disordered. Ser-388, Ser-402, and Ser-403 each carry phosphoserine.

Belongs to the TMEM184 family.

It localises to the membrane. Functionally, may activate the MAP kinase signaling pathway. The polypeptide is Transmembrane protein 184B (Tmem184b) (Mus musculus (Mouse)).